The chain runs to 321 residues: Polyprenyl transferase cle5 (321 aa).

9 consecutive transmembrane segments (helical) span residues 26–46 (PLLATFSGVWATILAGSHKIT), 57–77 (VLSQALLCFICSFVFCGAGMV), 107–127 (EALVWMAFQFISSWVLVSWML), 132–149 (VQAAMLPVTLSTILYPFA), 159–179 (IYPQYLLGFTLAYPSLIGTLA), 189–209 (LWASINQSLPMFVTVFTWTLY), 232–252 (VLAGSYIHHLLVVLAVLVLGA), 262–282 (SQWLWGGWMGVWTWSFLGQLV), and 300–320 (FALGVWTVFVCVVELLIGGNG).

This sequence belongs to the UbiA prenyltransferase family. It depends on Mg(2+) as a cofactor.

It is found in the membrane. It participates in secondary metabolite biosynthesis; terpenoid biosynthesis. In terms of biological role, polyprenyl transferase; part of the cluster A that mediates the biosynthesis of chevalone E and its oxidized derivatives that possess a unique five-membered lactone ring and can synergistically enhance the cytotoxicity of doxorubicin (DOX) in breast cancer cells. Within the pathway, cle5 takes part to the biosynthesis of the molecular scaffold by catalyzing the C-3 geranylgeranylation reaction of triacetic acid lactone (TAL) produced by cle1. The molecular scaffold is commonly biosynthesized by a series of enzymes including the non-reducing polyketide synthase (NR-PKS) cle1 that produces the alpha-pyrone triacetic acid lactone (TAL); The membrane-bound prenyltransferase cle5 that accepts TAL as its substrate to perform a C-3 geranylgeranylation reaction, in which the pathway-dedicated GGPS cle6 is required to provide GGPP, the other substrate of cle5; the FAD-dependent monooxygenase Cle3 that forms an (S)-epoxide ring at the terminal olefin of the geranylgeranyl group; and the terpene cyclase Cle7 that catalyzes the cyclization of the prenyl group that yields the pentacyclic pathway intermediate chevalone E. Chevalone E can derivatize into seven new oxidized analogs by the cytochrome P450 monooxygenases cle2 (acting at C-20) and cle4 (acting at C-11 and C-12). The polypeptide is Polyprenyl transferase cle5 (Aspergillus versicolor).